A 388-amino-acid chain; its full sequence is Succinate--CoA ligase [ADP-forming] subunit beta (388 aa).

The ATP-grasp domain maps to 9 to 244 (KALFAEYGLP…PSQDDAREAH (236 aa)). Residues Lys-46, 53–55 (GRG), Glu-99, Thr-102, and Glu-107 contribute to the ATP site. Mg(2+) is bound by residues Asn-199 and Asp-213. Residues Asn-264 and 321-323 (GIV) each bind substrate.

It belongs to the succinate/malate CoA ligase beta subunit family. Heterotetramer of two alpha and two beta subunits. Requires Mg(2+) as cofactor.

The catalysed reaction is succinate + ATP + CoA = succinyl-CoA + ADP + phosphate. It catalyses the reaction GTP + succinate + CoA = succinyl-CoA + GDP + phosphate. It functions in the pathway carbohydrate metabolism; tricarboxylic acid cycle; succinate from succinyl-CoA (ligase route): step 1/1. Functionally, succinyl-CoA synthetase functions in the citric acid cycle (TCA), coupling the hydrolysis of succinyl-CoA to the synthesis of either ATP or GTP and thus represents the only step of substrate-level phosphorylation in the TCA. The beta subunit provides nucleotide specificity of the enzyme and binds the substrate succinate, while the binding sites for coenzyme A and phosphate are found in the alpha subunit. The sequence is that of Succinate--CoA ligase [ADP-forming] subunit beta from Shewanella sediminis (strain HAW-EB3).